The sequence spans 241 residues: Centromere protein H (241 aa).

M1 is subject to N-acetylmethionine. Residues 1–24 (MEEQPRERSEAGAEACEEKRGLSQ) are disordered. The stretch at 28–186 (ERIEDRISLL…KEDVDKMENS (159 aa)) forms a coiled coil. K61 participates in a covalent cross-link: Glycyl lysine isopeptide (Lys-Gly) (interchain with G-Cter in SUMO2). T62 carries the phosphothreonine modification.

This sequence belongs to the CENP-H/MCM16 family. As to quaternary structure, self-associates. Component of the CENPA-NAC complex, at least composed of CENPA, CENPC, CENPH, CENPM, CENPN, CENPT and CENPU. The CENPA-NAC complex interacts with the CENPA-CAD complex, composed of CENPI, CENPK, CENPL, CENPO, CENPP, CENPQ, CENPR and CENPS. Interacts directly with CENPK. Interacts with KIF2C and NDC80. Interacts with TRIM36. As to expression, abundantly expressed in thymus, spleen, uterus, ovary, testis and muscle, and weakly expressed in small intestine, lung and stomach. Barely detectable expression in kidney, liver, skin and prostate gland. Not detected in brain, heart or adrenal gland. Also expressed weakly in various hematopoietic cell lines.

It is found in the nucleus. The protein resides in the chromosome. The protein localises to the centromere. Its subcellular location is the kinetochore. In terms of biological role, component of the CENPA-NAC (nucleosome-associated) complex, a complex that plays a central role in assembly of kinetochore proteins, mitotic progression and chromosome segregation. The CENPA-NAC complex recruits the CENPA-CAD (nucleosome distal) complex and may be involved in incorporation of newly synthesized CENPA into centromeres. Required for chromosome congression and efficiently align the chromosomes on a metaphase plate. The polypeptide is Centromere protein H (Mus musculus (Mouse)).